Here is a 732-residue protein sequence, read N- to C-terminus: Catalase-peroxidase (732 aa).

The interval 1 to 21 (MSMAEMRCPFSGHGAATTPAS) is disordered. The first 22 residues, 1–22 (MSMAEMRCPFSGHGAATTPASA), serve as a signal peptide directing secretion. The segment at residues 97-220 (WHSAGTYRLA…LAATEMGLIY (124 aa)) is a cross-link (tryptophyl-tyrosyl-methioninium (Trp-Tyr) (with M-246)). The Proton acceptor role is filled by histidine 98. The segment at residues 220 to 246 (YVNPEGPHGEPDPVASGREVRDTFARM) is a cross-link (tryptophyl-tyrosyl-methioninium (Tyr-Met) (with W-97)). Histidine 261 contacts heme b.

This sequence belongs to the peroxidase family. Peroxidase/catalase subfamily. In terms of assembly, homodimer or homotetramer. The cofactor is heme b. Post-translationally, formation of the three residue Trp-Tyr-Met cross-link is important for the catalase, but not the peroxidase activity of the enzyme.

The catalysed reaction is H2O2 + AH2 = A + 2 H2O. The enzyme catalyses 2 H2O2 = O2 + 2 H2O. Its function is as follows. Bifunctional enzyme with both catalase and broad-spectrum peroxidase activity. The chain is Catalase-peroxidase from Synechococcus sp. (strain RCC307).